The primary structure comprises 232 residues: Probable thiopurine S-methyltransferase (232 aa).

Residues 14 to 25 (WENRWQEGRTGF), Leu54, Glu75, and Arg137 contribute to the S-adenosyl-L-methionine site. Position 25 (Phe25) interacts with substrate.

Belongs to the class I-like SAM-binding methyltransferase superfamily. TPMT family.

Its subcellular location is the cytoplasm. It catalyses the reaction S-adenosyl-L-methionine + a thiopurine = S-adenosyl-L-homocysteine + a thiopurine S-methylether.. This Danio rerio (Zebrafish) protein is Probable thiopurine S-methyltransferase (tpmt).